The chain runs to 37 residues: Large ribosomal subunit protein bL36 (37 aa).

The protein belongs to the bacterial ribosomal protein bL36 family.

The chain is Large ribosomal subunit protein bL36 from Synechococcus sp. (strain CC9311).